A 571-amino-acid chain; its full sequence is E3 ubiquitin-protein ligase CHFR (571 aa).

A disordered region spans residues 1 to 21; sequence MERPEEGKQSPPPQPWGRLLR. One can recognise an FHA domain in the interval 38-89; that stretch reads WTIGRRRGCDLSFPSNKLVSGDHCRIAVDEKSGQVTLEDTSTSGTVINKLKV. Residues 113 to 138 are disordered; the sequence is EHRSGGGGISPKGSGPSVASDEVSSF. A Phosphoserine modification is found at Ser152. The segment at 212–251 adopts an RING-type zinc-finger fold; the sequence is CIICQDLLHDCVSLQPCMHTFCAACYSGWMERSSLCPTCR. The residue at position 294 (Thr294) is a Phosphothreonine. The interval 297–325 is disordered; it reads MLQPKVRRSFSDEEGSSEDLLELSDVDSE. Over residues 308–325 the composition is skewed to acidic residues; that stretch reads DEEGSSEDLLELSDVDSE. The PBZ-type zinc-finger motif lies at 540–562; sequence PDCYWGRNCRTQVKAHHAMKFNH.

The protein belongs to the CHFR family. As to quaternary structure, interacts with HDAC1 and HDAC2. Interacts with PML (with sumoylated form of PML). Post-translationally, poly-ADP-ribosylated. In addition to binding non covalently poly(ADP-ribose) via its PBZ-type zinc finger, the protein is also covalently poly-ADP-ribosylated by PARP1. Autoubiquitinated; may regulate its cellular level. In terms of processing, phosphorylated by PKB. Phosphorylation may affect its E3 ligase activity.

Its subcellular location is the nucleus. It is found in the PML body. The enzyme catalyses S-ubiquitinyl-[E2 ubiquitin-conjugating enzyme]-L-cysteine + [acceptor protein]-L-lysine = [E2 ubiquitin-conjugating enzyme]-L-cysteine + N(6)-ubiquitinyl-[acceptor protein]-L-lysine.. Its pathway is protein modification; protein ubiquitination. E3 ubiquitin-protein ligase that functions in the antephase checkpoint by actively delaying passage into mitosis in response to microtubule poisons. Acts in early prophase before chromosome condensation, when the centrosome move apart from each other along the periphery of the nucleus. Probably involved in signaling the presence of mitotic stress caused by microtubule poisons by mediating the 'Lys-48'-linked ubiquitination of target proteins, leading to their degradation by the proteasome. Promotes the ubiquitination and subsequent degradation of AURKA and PLK1. Probably acts as a tumor suppressor, possibly by mediating the polyubiquitination of HDAC1, leading to its degradation. May also promote the formation of 'Lys-63'-linked polyubiquitin chains and functions with the specific ubiquitin-conjugating UBC13-MMS2 (UBE2N-UBE2V2) heterodimer. Substrates that are polyubiquitinated at 'Lys-63' are usually not targeted for degradation, but are rather involved in signaling cellular stress. In Pongo abelii (Sumatran orangutan), this protein is E3 ubiquitin-protein ligase CHFR (CHFR).